The sequence spans 602 residues: Cytoskeleton-associated protein 4 (602 aa).

The disordered stretch occupies residues 1 to 83; that stretch reads MPSAKQRGSK…GGGGKSSSSS (83 aa). Residues 1-106 are Cytoplasmic-facing; it reads MPSAKQRGSK…SASCSRRLGR (106 aa). Residues serine 3, serine 17, and serine 19 each carry the phosphoserine modification. Lysine 21 carries the N6-acetyllysine modification. The span at 35–52 shows a compositional bias: pro residues; it reads KPPPAPQQPPPPPAPHPQ. The segment covering 53–64 has biased composition (low complexity); sequence QHPQQHPQNQAH. Residue cysteine 100 is the site of S-palmitoyl cysteine; by ZDHHC2 attachment. The helical transmembrane segment at 107–127 threads the bilayer; it reads ALNFLFYLALVAAAAFSGWCV. At 128-602 the chain is on the extracellular side; that stretch reads HHVLEEVQQV…VKVEKIHEKV (475 aa). Positions 130 to 214 form a coiled coil; the sequence is VLEEVQQVRR…QKLQNEILKD (85 aa). Serine 232 is modified (phosphoserine; by FAM20C). Coiled coils occupy residues 256–460 and 533–602; these read TEVQ…GLGS and LSSL…HEKV. Serine 312 carries the phosphoserine modification.

In terms of assembly, interacts with REEP5. Reversibly palmitoylated. Palmitoylation at Cys-100 by ZDHHC2 is required for its trafficking from the ER to the plasma membrane and for its perinuclear localization. Palmitoylation by ZDHHC2 is also required for its function in APF-mediated antiproliferative signaling. Post-translationally, increased phosphorylation during mitosis prevents binding to microtubules.

Its subcellular location is the endoplasmic reticulum membrane. The protein resides in the cell membrane. The protein localises to the cytoplasm. It localises to the cytoskeleton. It is found in the perinuclear region. Its function is as follows. Mediates the anchoring of the endoplasmic reticulum to microtubules. High-affinity epithelial cell surface receptor for the FZD8-related low molecular weight sialoglycopeptide APF/antiproliferative factor. Mediates the APF antiproliferative signaling within cells. This is Cytoskeleton-associated protein 4 (CKAP4) from Homo sapiens (Human).